A 429-amino-acid chain; its full sequence is GTPase Obg (429 aa).

The Obg domain occupies 1–158 (MFADSAKIFI…LNVTLELKVI (158 aa)). In terms of domain architecture, OBG-type G spans 159–333 (ADVGLVGFPN…LLYYVSDLLK (175 aa)). GTP-binding positions include 165 to 172 (GFPNVGKS), 190 to 194 (FTTLN), 212 to 215 (DIPG), 282 to 285 (NKTD), and 314 to 316 (SAV). Mg(2+) contacts are provided by Ser-172 and Thr-192. One can recognise an OCT domain in the interval 350 to 429 (ENLVMSEPYT…MYGLEFDYYK (80 aa)).

It belongs to the TRAFAC class OBG-HflX-like GTPase superfamily. OBG GTPase family. As to quaternary structure, monomer. The cofactor is Mg(2+).

The protein resides in the cytoplasm. In terms of biological role, an essential GTPase which binds GTP, GDP and possibly (p)ppGpp with moderate affinity, with high nucleotide exchange rates and a fairly low GTP hydrolysis rate. Plays a role in control of the cell cycle, stress response, ribosome biogenesis and in those bacteria that undergo differentiation, in morphogenesis control. In Lachnoclostridium phytofermentans (strain ATCC 700394 / DSM 18823 / ISDg) (Clostridium phytofermentans), this protein is GTPase Obg.